The chain runs to 633 residues: MSKKVKKYIVVESPAKAKTIKSILGNEYEVFASMGHIIDLPKSKFGVDLEKDFEPEFAVIKGKEKVVEKLKDLAKKGELLIASDMDREGEAIAWHIARVTNTLGRKNRIVFSEITPRVIREAVKNPREIDMKKVRAQLARRILDRIVGYSLSPVLWRNFKSNLSAGRVQSATLKLVCDREREILRFVPKKYHRITVNFDGLTAEIDVKEKKFFDAETLKEIQSIDELVVEEKKVSVKKFAPPEPFKTSTLQQEAYSKLGFSVSKTMMIAQQLYEGVETKDGHIAFITYMRTDSTRVSDYAKEEARNLITEVFGEEYVGSKRERRKSNAKIQDAHEAIRPTNVFMTPEEAGKYLNSDQKKLYELIWKRFLASQMKPSQYEETRFVLRTKDGKYRFKGTVLKKIFDGYEKVWKTERNTGEFPFEEGESVKPVVVKIEEQETKPKPRYTEGSLVKEMERLGIGRPSTYASTIKLLLNRGYIKKIRGYLYPTIVGSVVMDYLEKKYSDVVSVSFTAEMEKDLDEVEQGKKTDKIVLREFYESFSSVFDRNDRIVVDFPTNQKCSCGKEMRLSFGKYGFYLKCECGKTRSVKNDEIAVIDDGKIFLGRKDSESGSPDGRSVEGKGNLSEKRRKGKKGS.

One can recognise a Toprim domain in the interval 6–115 (KKYIVVESPA…KNRIVFSEIT (110 aa)). Mg(2+) is bound by residues Glu12 and Asp84. One can recognise a Topo IA-type catalytic domain in the interval 130 to 543 (DMKKVRAQLA…EFYESFSSVF (414 aa)). The interval 164–169 (SAGRVQ) is interaction with DNA. Tyr288 functions as the O-(5'-phospho-DNA)-tyrosine intermediate in the catalytic mechanism. Cystine bridges form between Cys559-Cys578 and Cys561-Cys580. The segment at 559–580 (CSCGKEMRLSFGKYGFYLKCEC) adopts a C4-type zinc-finger fold. Residues 601-633 (LGRKDSESGSPDGRSVEGKGNLSEKRRKGKKGS) are disordered.

The protein belongs to the type IA topoisomerase family. In terms of assembly, monomer. It depends on Mg(2+) as a cofactor.

The catalysed reaction is ATP-independent breakage of single-stranded DNA, followed by passage and rejoining.. Functionally, releases the supercoiling and torsional tension of DNA, which is introduced during the DNA replication and transcription, by transiently cleaving and rejoining one strand of the DNA duplex. Introduces a single-strand break via transesterification at a target site in duplex DNA. The scissile phosphodiester is attacked by the catalytic tyrosine of the enzyme, resulting in the formation of a DNA-(5'-phosphotyrosyl)-enzyme intermediate and the expulsion of a 3'-OH DNA strand. The free DNA strand then undergoes passage around the unbroken strand, thus removing DNA supercoils. Finally, in the religation step, the DNA 3'-OH attacks the covalent intermediate to expel the active-site tyrosine and restore the DNA phosphodiester backbone. The chain is DNA topoisomerase 1 from Thermotoga maritima (strain ATCC 43589 / DSM 3109 / JCM 10099 / NBRC 100826 / MSB8).